We begin with the raw amino-acid sequence, 182 residues long: SAGA-associated factor 11 homolog (182 aa).

The interval 61 to 84 (GSGAAVEGEPEDSKPYTIVDQPDT) is disordered. The SGF11-type zinc-finger motif lies at 98 to 119 (CHCPNCNRIVAASRFAPHLEKC). Residues 133 to 182 (RIANTRDVGTGNYFGGDEDDEDDADWSGEKRKKKISQVRTNGSKKNGKTS) are disordered. Positions 148-158 (GDEDDEDDADW) are enriched in acidic residues.

Belongs to the SGF11 family. In terms of assembly, component of some SAGA transcription coactivator-HAT complexes. Within the SAGA complex, participates in a subcomplex of SAGA called the DUB module (deubiquitination module).

The protein localises to the nucleus. Component of the transcription regulatory histone acetylation (HAT) complex SAGA, a multiprotein complex that activates transcription by remodeling chromatin and mediating histone acetylation and deubiquitination. Within the SAGA complex, participates in a subcomplex that specifically deubiquitinates histone H2B. The SAGA complex is recruited to specific gene promoters by activators, where it is required for transcription. This chain is SAGA-associated factor 11 homolog, found in Anopheles gambiae (African malaria mosquito).